A 484-amino-acid polypeptide reads, in one-letter code: uncharacterized protein (484 aa).

Residues 14–82 (VPLHRQIEQY…KGGGTKVVNS (69 aa)) enclose the HTH gntR-type domain. Positions 42–61 (QRTLADMFQVNRSTVTAAID) form a DNA-binding region, H-T-H motif. Lys-327 bears the N6-(pyridoxal phosphate)lysine mark.

This sequence in the C-terminal section; belongs to the class-I pyridoxal-phosphate-dependent aminotransferase family. Pyridoxal 5'-phosphate is required as a cofactor.

This is an uncharacterized protein from Bacillus subtilis (strain 168).